The sequence spans 563 residues: Beta-catenin-like protein 1 (563 aa).

M1 carries the post-translational modification N-acetylmethionine. The tract at residues 1-81 (MDVGELLSYQ…EEEEPLDESS (81 aa)) is disordered. The Nuclear localization signal signature appears at 16–33 (KRPRDDEEEELKTRRKQT). Over residues 34–45 (GPRERGRYREDE) the composition is skewed to basic and acidic residues. The segment covering 66–78 (DGEEEEEEEEPLD) has biased composition (acidic residues). HEAT repeat units lie at residues 79-129 (ESSV…VVAT) and 134-176 (YHLL…TLHE). At K91 the chain carries N6-acetyllysine. Positions 130–140 (MPDLYHLLVEL) match the Nuclear export signal (NES) motif. ARM repeat units follow at residues 178-228 (EEGA…MAEF), 229-273 (RPEM…LQDN), 274-323 (DENR…CLML), 325-363 (SNRE…AMIG), and 364-417 (PEGA…LLRN). A Phosphoserine modification is found at S389. The stretch at 476–540 (DMEDEFYLRR…HIIKEYAENI (65 aa)) forms a coiled coil. S545 is modified (phosphoserine).

Component of the PRP19-CDC5L splicing complex composed of a core complex comprising a homotetramer of PRPF19, CDC5L, PLRG1 and BCAS2, and at least three less stably associated proteins CTNNBL1, CWC15 and HSPA8. Interacts directly with CWC15 and CDC5L in the complex. Interacts with AICDA; the interaction is important for the antibody diversification activity of AICDA. Interacts with PRPF31 (via its NLS). Interacts (via its N-terminal NLS) with KPNA1 and KPNA2.

It is found in the nucleus. In terms of biological role, component of the PRP19-CDC5L complex that forms an integral part of the spliceosome and is required for activating pre-mRNA splicing. Participates in AID/AICDA-mediated somatic hypermutation (SHM) and class-switch recombination (CSR), 2 processes resulting in the production of high-affinity, mutated isotype-switched antibodies. This Rattus norvegicus (Rat) protein is Beta-catenin-like protein 1 (Ctnnbl1).